A 167-amino-acid polypeptide reads, in one-letter code: Peptide deformylase (167 aa).

Fe cation contacts are provided by Cys-91 and His-133. Glu-134 is a catalytic residue. Residue His-137 participates in Fe cation binding.

It belongs to the polypeptide deformylase family. The cofactor is Fe(2+).

The enzyme catalyses N-terminal N-formyl-L-methionyl-[peptide] + H2O = N-terminal L-methionyl-[peptide] + formate. Its function is as follows. Removes the formyl group from the N-terminal Met of newly synthesized proteins. Requires at least a dipeptide for an efficient rate of reaction. N-terminal L-methionine is a prerequisite for activity but the enzyme has broad specificity at other positions. The sequence is that of Peptide deformylase from Pseudoalteromonas translucida (strain TAC 125).